The primary structure comprises 551 residues: Glucans biosynthesis protein D (551 aa).

A signal peptide (tat-type signal) is located at residues 1–32; it reads MDRRRFIKGSMAMAAVCGTSGIASLFSQAAFA.

Belongs to the OpgD/OpgG family. In terms of processing, predicted to be exported by the Tat system. The position of the signal peptide cleavage has not been experimentally proven.

The protein localises to the periplasm. It participates in glycan metabolism; osmoregulated periplasmic glucan (OPG) biosynthesis. Probably involved in the control of the structural glucose backbone of osmoregulated periplasmic glucans (OPGs). This chain is Glucans biosynthesis protein D, found in Escherichia coli O139:H28 (strain E24377A / ETEC).